The sequence spans 439 residues: Signal recognition particle 54 kDa protein (439 aa).

Residues 104–111, 184–188, and 242–245 contribute to the GTP site; these read GLQGSGKT, DTAGR, and SKLD.

This sequence belongs to the GTP-binding SRP family. SRP54 subfamily. As to quaternary structure, part of the signal recognition particle protein translocation system, which is composed of SRP and FtsY. Archaeal SRP consists of a 7S RNA molecule of 300 nucleotides and two protein subunits: SRP54 and SRP19.

Its subcellular location is the cytoplasm. The catalysed reaction is GTP + H2O = GDP + phosphate + H(+). In terms of biological role, involved in targeting and insertion of nascent membrane proteins into the cytoplasmic membrane. Binds to the hydrophobic signal sequence of the ribosome-nascent chain (RNC) as it emerges from the ribosomes. The SRP-RNC complex is then targeted to the cytoplasmic membrane where it interacts with the SRP receptor FtsY. In Methanococcoides burtonii (strain DSM 6242 / NBRC 107633 / OCM 468 / ACE-M), this protein is Signal recognition particle 54 kDa protein.